The chain runs to 203 residues: Formate hydrogenlyase subunit 2 (203 aa).

4Fe-4S ferredoxin-type domains are found at residues 2–32, 42–72, 73–102, and 137–169; these read NRFVIADSTLCIGCHTCEAACSETHRQHGLQ, NEKESAPQLCHHCEDAPCAVVCPVNAITRVD, GAVQLNESLCVSCKLCGIACPFGAIEFSGS, and RAIAVKCDLCSFDEQGPACVRMCPTKALHLVDN. [4Fe-4S] cluster is bound by residues Cys12, Cys15, Cys18, Cys22, Cys51, Cys54, Cys59, Cys63, Cys82, Cys85, Cys88, Cys92, Cys143, Cys146, Cys155, and Cys159.

In terms of assembly, FHL comprises of a formate dehydrogenase, unidentified electron carriers and a hydrogenase (isoenzyme 3). In this non-energy conserving pathway, molecular hydrogen and carbodioxide are released from formate. [4Fe-4S] cluster serves as cofactor.

Probable electron transfer protein for hydrogenase 3. This Escherichia coli (strain K12) protein is Formate hydrogenlyase subunit 2 (hycB).